A 469-amino-acid polypeptide reads, in one-letter code: Glutamine synthetase (469 aa).

Residues 14–98 enclose the GS beta-grasp domain; that stretch reads NDVKYVDLRF…VVCDVLEPTT (85 aa). Positions 106-469 constitute a GS catalytic domain; sequence PRGIAKKAMA…PVEFEMYYSV (364 aa). Mg(2+) contacts are provided by E131 and E133. E209 contacts ATP. E214 and E221 together coordinate Mg(2+). Residues 265–266 and G266 each bind L-glutamate; that span reads NG. H270 is a binding site for Mg(2+). ATP contacts are provided by residues 272–274 and S274; that span reads HQS. L-glutamate is bound by residues R322, E328, and R340. R340, R345, and K353 together coordinate ATP. E358 contributes to the Mg(2+) binding site. R360 serves as a coordination point for L-glutamate. O-AMP-tyrosine is present on Y398.

The protein belongs to the glutamine synthetase family. In terms of assembly, oligomer of 12 subunits arranged in the form of two hexameric ring. The cofactor is Mg(2+).

Its subcellular location is the cytoplasm. It catalyses the reaction L-glutamate + NH4(+) + ATP = L-glutamine + ADP + phosphate + H(+). The activity of this enzyme could be controlled by adenylation under conditions of abundant glutamine. Its function is as follows. Catalyzes the ATP-dependent biosynthesis of glutamine from glutamate and ammonia. The sequence is that of Glutamine synthetase from Azorhizobium caulinodans (strain ATCC 43989 / DSM 5975 / JCM 20966 / LMG 6465 / NBRC 14845 / NCIMB 13405 / ORS 571).